The following is a 442-amino-acid chain: 26S proteasome regulatory subunit 6A (442 aa).

Ser-12 bears the Phosphoserine mark. 230–237 provides a ligand contact to ATP; it reads GPPGTGKT. Phosphoserine is present on Ser-379.

The protein belongs to the AAA ATPase family. As to quaternary structure, component of the 19S proteasome regulatory particle complex. The 26S proteasome consists of a 20S core particle (CP) and two 19S regulatory subunits (RP). The regulatory particle is made of a lid composed of 9 subunits, a base containing 6 ATPases including PSMC3 and few additional components. Interacts with PAAF1.

It localises to the cytoplasm. Its subcellular location is the nucleus. Functionally, component of the 26S proteasome, a multiprotein complex involved in the ATP-dependent degradation of ubiquitinated proteins. This complex plays a key role in the maintenance of protein homeostasis by removing misfolded or damaged proteins, which could impair cellular functions, and by removing proteins whose functions are no longer required. Therefore, the proteasome participates in numerous cellular processes, including cell cycle progression, apoptosis, or DNA damage repair. PSMC3 belongs to the heterohexameric ring of AAA (ATPases associated with diverse cellular activities) proteins that unfolds ubiquitinated target proteins that are concurrently translocated into a proteolytic chamber and degraded into peptides. The protein is 26S proteasome regulatory subunit 6A (Psmc3) of Mus musculus (Mouse).